A 3148-amino-acid chain; its full sequence is Huntingtin (3148 aa).

2 HEAT repeats span residues 149–186 and 191–228; these read PYLV…ALGH and GEIK…HSRR. Polar residues-rich tracts occupy residues 428–451, 475–486, and 516–526; these read QQPR…SSEQ, SRSSSCGANITP, and PSDSSQTTTEG. 2 disordered regions span residues 428 to 532 and 557 to 622; these read QQPR…SAVT and QDEE…NKMS. Basic and acidic residues predominate over residues 602–621; that stretch reads SVDRFIPKDEPPEPEPDNKM. 2 HEAT repeats span residues 760–797 and 861–898; these read LSLV…SLCG and LQER…RLFF. Composition is skewed to low complexity over residues 1025–1042 and 1105–1115; these read TLSV…TTSS and SSSSTNTSGGT. 3 disordered regions span residues 1025–1047, 1098–1117, and 1158–1215; these read TLSV…VDPE, WAGE…GTHK, and GPPV…GSTA. Positions 1201-1215 are enriched in polar residues; the sequence is EANTGRPTESTGSTA. The HEAT 5 repeat unit spans residues 1419–1456; it reads LFEPLVIKALKQYTTSTSVALQRQVLDLLAQLVQLRVN. Positions 1712–1730 are enriched in polar residues; that stretch reads PNLSPSDQPAGDGQQNQEP. Disordered stretches follow at residues 1712–1735 and 2072–2091; these read PNLS…GEAQ and VSDT…DGDP. A compositionally biased stretch (low complexity) spans 2072–2084; sequence VSDTSSPSTPVTS. The Nuclear export signal signature appears at 2398–2407; sequence IIISLSRLPL. The span at 2639 to 2649 shows a compositional bias: acidic residues; the sequence is EWGEDEDDEAD. Residues 2639-2664 are disordered; that stretch reads EWGEDEDDEADPPAPTSPPLSPINSR. The span at 2650 to 2659 shows a compositional bias: pro residues; that stretch reads PPAPTSPPLS.

Belongs to the huntingtin family.

The protein resides in the cytoplasm. It localises to the nucleus. May play a role in microtubule-mediated transport or vesicle function. The protein is Huntingtin (htt) of Takifugu rubripes (Japanese pufferfish).